The primary structure comprises 55 residues: Regulatory protein MokB (55 aa).

Functionally, overlapping regulatory peptide whose translation enables hokB expression. The chain is Regulatory protein MokB (mokB) from Escherichia coli (strain K12).